A 460-amino-acid chain; its full sequence is Dynactin subunit 4 (460 aa).

Residue A2 is modified to N-acetylalanine. Residues 152-172 (QQLAQKEKVERDRKKLARRRN) are a coiled coil. The residue at position 196 (S196) is a Phosphoserine. A Glycyl lysine isopeptide (Lys-Gly) (interchain with G-Cter in SUMO2) cross-link involves residue K215. Phosphothreonine is present on T407.

It belongs to the dynactin subunit 4 family. In terms of assembly, subunit of dynactin, a multiprotein complex part of a tripartite complex with dynein and a adapter, such as BICDL1, BICD2 or HOOK3. The dynactin complex is built around ACTR1A/ACTB filament and consists of an actin-related filament composed of a shoulder domain, a pointed end and a barbed end. Its length is defined by its flexible shoulder domain. The soulder is composed of 2 DCTN1 subunits, 4 DCTN2 and 2 DCTN3. The 4 DCNT2 (via N-terminus) bind the ACTR1A filament and act as molecular rulers to determine the length. The pointed end is important for binding dynein-dynactin cargo adapters. Consists of 4 subunits: ACTR10, DCNT4, DCTN5 and DCTN6. The barbed end is composed of a CAPZA1:CAPZB heterodimers, which binds ACTR1A/ACTB filament and dynactin and stabilizes dynactin. Interacts with ATP7B, but not ATP7A, in a copper-dependent manner. Interacts with ANK2; this interaction is required for localization at costameres. Interacts with N4BP2L1.

The protein resides in the cytoplasm. It localises to the cytoskeleton. The protein localises to the microtubule organizing center. It is found in the centrosome. Its subcellular location is the stress fiber. The protein resides in the cell cortex. It localises to the myofibril. The protein localises to the sarcomere. Functionally, part of the dynactin complex that activates the molecular motor dynein for ultra-processive transport along microtubules. The polypeptide is Dynactin subunit 4 (DCTN4) (Pongo abelii (Sumatran orangutan)).